A 207-amino-acid chain; its full sequence is Small ribosomal subunit protein uS4 (207 aa).

The tract at residues 31–55 is disordered; that stretch reads KCKLDSKPGQHGRTSGARTSDYGTQ. Polar residues predominate over residues 42–53; that stretch reads GRTSGARTSDYG. The S4 RNA-binding domain occupies 97-160; that stretch reads SRLDNVVYRM…KKQARILEAL (64 aa).

This sequence belongs to the universal ribosomal protein uS4 family. In terms of assembly, part of the 30S ribosomal subunit. Contacts protein S5. The interaction surface between S4 and S5 is involved in control of translational fidelity.

One of the primary rRNA binding proteins, it binds directly to 16S rRNA where it nucleates assembly of the body of the 30S subunit. In terms of biological role, with S5 and S12 plays an important role in translational accuracy. The sequence is that of Small ribosomal subunit protein uS4 from Paraburkholderia phymatum (strain DSM 17167 / CIP 108236 / LMG 21445 / STM815) (Burkholderia phymatum).